Here is a 322-residue protein sequence, read N- to C-terminus: Breast cancer metastasis-suppressor 1-like protein (322 aa).

The span at 1-16 (MPVHSREKKESNHNDM) shows a compositional bias: basic and acidic residues. A disordered region spans residues 1–56 (MPVHSREKKESNHNDMEVDYPENEGTSSEEDDSDSSSGSEEGDSSEMDDEDCERRR). Acidic residues predominate over residues 17-51 (EVDYPENEGTSSEEDDSDSSSGSEEGDSSEMDDED). Coiled coils occupy residues 50 to 82 (EDCE…KERL) and 147 to 178 (EKLL…ITSE).

It belongs to the BRMS1 family.

It is found in the nucleus. In terms of biological role, involved in the histone deacetylase (HDAC1)-dependent transcriptional repression activity. This chain is Breast cancer metastasis-suppressor 1-like protein (brms1l), found in Xenopus tropicalis (Western clawed frog).